A 3029-amino-acid polypeptide reads, in one-letter code: Polycystin-1-related protein (3029 aa).

The signal sequence occupies residues methionine 1–alanine 21. Over lysine 22 to proline 1685 the chain is Extracellular. Residues valine 29–alanine 121 enclose the WSC domain. 2 PKD domains span residues glutamate 364–valine 450 and aspartate 546–tyrosine 634. In terms of domain architecture, REJ spans cysteine 633–threonine 1476. 3 disordered regions span residues arginine 754–glutamate 773, cysteine 909–proline 931, and threonine 989–proline 1051. Over residues valine 918–proline 931 the composition is skewed to polar residues. Residues serine 997–serine 1013 show a composition bias toward acidic residues. Residues threonine 1020–lysine 1047 show a composition bias toward polar residues. In terms of domain architecture, GAIN-B spans arginine 1525–histidine 1671. Cystine bridges form between cysteine 1624/cysteine 1651 and cysteine 1639/cysteine 1653. Positions cysteine 1624 to histidine 1671 are GPS. The helical transmembrane segment at leucine 1686–valine 1706 threads the bilayer. The Cytoplasmic segment spans residues lysine 1707–arginine 1895. Positions serine 1733–phenylalanine 1851 constitute a PLAT domain. The helical transmembrane segment at leucine 1896–proline 1916 threads the bilayer. Residues lysine 1917–serine 1933 lie on the Extracellular side of the membrane. A helical membrane pass occupies residues isoleucine 1934 to phenylalanine 1954. At phenylalanine 1955–glycine 2101 the chain is on the cytoplasmic side. Residues phenylalanine 2102–isoleucine 2122 form a helical membrane-spanning segment. The Extracellular portion of the chain corresponds to tryptophan 2123 to leucine 2140. The chain crosses the membrane as a helical span at residues valine 2141–phenylalanine 2161. The Cytoplasmic segment spans residues tyrosine 2162 to tyrosine 2250. A helical membrane pass occupies residues valine 2251 to valine 2271. Over alanine 2272 to lysine 2462 the chain is Extracellular. A helical membrane pass occupies residues leucine 2463–methionine 2483. Topologically, residues threonine 2484–glutamine 2496 are cytoplasmic. The chain crosses the membrane as a helical span at residues leucine 2497–leucine 2517. Residues tyrosine 2518–glutamine 2538 lie on the Extracellular side of the membrane. The chain crosses the membrane as a helical span at residues isoleucine 2539–isoleucine 2559. Topologically, residues arginine 2560–leucine 2586 are cytoplasmic. A helical transmembrane segment spans residues alanine 2587 to phenylalanine 2607. At glycine 2608–tyrosine 2651 the chain is on the extracellular side. A helical transmembrane segment spans residues phenylalanine 2652–leucine 2672. Over histidine 2673 to methionine 3029 the chain is Cytoplasmic. The interval lysine 2704–leucine 2726 is disordered. A compositionally biased stretch (acidic residues) spans aspartate 2716–leucine 2726.

Belongs to the polycystin family. In terms of assembly, heterodimer of 2 chains generated by proteolytic processing; the large extracellular N-terminal fragment and the membrane-bound C-terminal fragment predominantly remain associated and non-covalently linked. Autoproteolytically processed at the GPS region of the GAIN-B domain; this cleavage modulates receptor activity. As to expression, component of the acid-insoluble and acid-soluble organic matrix of the aragonitic skeleton (at protein level).

The protein resides in the membrane. This chain is Polycystin-1-related protein, found in Acropora millepora (Staghorn coral).